We begin with the raw amino-acid sequence, 215 residues long: Pyrrolidone-carboxylate peptidase (215 aa).

Catalysis depends on residues Glu-80, Cys-143, and His-167.

The protein belongs to the peptidase C15 family. Homotetramer.

The protein resides in the cytoplasm. It carries out the reaction Release of an N-terminal pyroglutamyl group from a polypeptide, the second amino acid generally not being Pro.. Functionally, removes 5-oxoproline from various penultimate amino acid residues except L-proline. This chain is Pyrrolidone-carboxylate peptidase, found in Bacillus cereus (strain AH820).